The following is a 443-amino-acid chain: Thymidine phosphorylase (443 aa).

Belongs to the thymidine/pyrimidine-nucleoside phosphorylase family. In terms of assembly, homodimer.

The catalysed reaction is thymidine + phosphate = 2-deoxy-alpha-D-ribose 1-phosphate + thymine. Its pathway is pyrimidine metabolism; dTMP biosynthesis via salvage pathway; dTMP from thymine: step 1/2. Its function is as follows. The enzymes which catalyze the reversible phosphorolysis of pyrimidine nucleosides are involved in the degradation of these compounds and in their utilization as carbon and energy sources, or in the rescue of pyrimidine bases for nucleotide synthesis. The protein is Thymidine phosphorylase of Shewanella baltica (strain OS155 / ATCC BAA-1091).